A 652-amino-acid polypeptide reads, in one-letter code: DNA ligase (652 aa).

Residues 29–33 (DSEYD), 78–79 (SL), and Glu107 each bind NAD(+). Lys109 (N6-AMP-lysine intermediate) is an active-site residue. NAD(+)-binding residues include Arg130, Glu164, Lys278, and Lys302. Zn(2+) contacts are provided by Cys395, Cys398, Cys413, and Cys418. Residues 577 to 652 (DRQAELFGLT…IEDEDWLLNL (76 aa)) enclose the BRCT domain.

The protein belongs to the NAD-dependent DNA ligase family. LigA subfamily. It depends on Mg(2+) as a cofactor. Requires Mn(2+) as cofactor.

It carries out the reaction NAD(+) + (deoxyribonucleotide)n-3'-hydroxyl + 5'-phospho-(deoxyribonucleotide)m = (deoxyribonucleotide)n+m + AMP + beta-nicotinamide D-nucleotide.. DNA ligase that catalyzes the formation of phosphodiester linkages between 5'-phosphoryl and 3'-hydroxyl groups in double-stranded DNA using NAD as a coenzyme and as the energy source for the reaction. It is essential for DNA replication and repair of damaged DNA. In Streptococcus equi subsp. zooepidemicus (strain MGCS10565), this protein is DNA ligase.